Here is a 130-residue protein sequence, read N- to C-terminus: Small ribosomal subunit protein uS9 (130 aa).

It belongs to the universal ribosomal protein uS9 family.

This is Small ribosomal subunit protein uS9 from Streptococcus equi subsp. zooepidemicus (strain H70).